Reading from the N-terminus, the 668-residue chain is DNA ligase (668 aa).

Residues aspartate 35–aspartate 39, serine 84–leucine 85, and glutamate 115 each bind NAD(+). The active-site N6-AMP-lysine intermediate is lysine 117. Residues arginine 138, glutamate 172, lysine 288, and lysine 312 each coordinate NAD(+). Residues cysteine 406, cysteine 409, cysteine 425, and cysteine 430 each contribute to the Zn(2+) site. The BRCT domain occupies lysine 589–serine 668.

It belongs to the NAD-dependent DNA ligase family. LigA subfamily. Requires Mg(2+) as cofactor. It depends on Mn(2+) as a cofactor.

The catalysed reaction is NAD(+) + (deoxyribonucleotide)n-3'-hydroxyl + 5'-phospho-(deoxyribonucleotide)m = (deoxyribonucleotide)n+m + AMP + beta-nicotinamide D-nucleotide.. In terms of biological role, DNA ligase that catalyzes the formation of phosphodiester linkages between 5'-phosphoryl and 3'-hydroxyl groups in double-stranded DNA using NAD as a coenzyme and as the energy source for the reaction. It is essential for DNA replication and repair of damaged DNA. The sequence is that of DNA ligase from Petrotoga mobilis (strain DSM 10674 / SJ95).